We begin with the raw amino-acid sequence, 332 residues long: Melanocortin receptor 4 (332 aa).

The Extracellular portion of the chain corresponds to 1-43; that stretch reads MNSTHHHGMYTSLHLWNRSSYGLHGNASESLGKGHPDGGCYEQ. N-linked (GlcNAc...) asparagine glycans are attached at residues N2, N17, and N26. 2 cysteine pairs are disulfide-bonded: C40-C279 and C271-C277. The chain crosses the membrane as a helical span at residues 44-69; the sequence is LFVSPEVFVTLGVISLLENILVIVAI. Topologically, residues 70 to 81 are cytoplasmic; sequence AKNKNLHSPMYF. A helical transmembrane segment spans residues 82 to 106; it reads FICSLAVADMLVSVSNGSETIVITL. E100 serves as a coordination point for Ca(2+). Residues 107–123 lie on the Extracellular side of the membrane; it reads LNSTDTDAQSFTVNIDN. N108 carries N-linked (GlcNAc...) asparagine glycosylation. The Ca(2+) site is built by D122 and D126. Residues 124-145 traverse the membrane as a helical segment; sequence VIDSVICSSLLASICSLLSIAV. Topologically, residues 146–165 are cytoplasmic; that stretch reads DRYFTIFYALQYHNIMTVRR. Residues 166–186 traverse the membrane as a helical segment; the sequence is VGIIISCIWAACTVSGVLFII. Residues 187-191 lie on the Extracellular side of the membrane; sequence YSDSS. The chain crosses the membrane as a helical span at residues 192–215; that stretch reads AVIICLISMFFTMLVLMASLYVHM. Over 216-248 the chain is Cytoplasmic; it reads FLMARLHIKRIAVLPGTGTIRQGTNMKGAITLT. The helical transmembrane segment at 249–271 threads the bilayer; it reads ILIGVFVVCWAPFFLHLLFYISC. Topologically, residues 272–280 are extracellular; the sequence is PQNPYCVCF. A helical membrane pass occupies residues 281–304; it reads MSHFNLYLILIMCNAVIDPLIYAL. At 305-332 the chain is on the cytoplasmic side; sequence RSQELRKTFKEIICFYPLGGICELSSRY. C318 carries S-palmitoyl cysteine lipidation.

The protein belongs to the G-protein coupled receptor 1 family. As to quaternary structure, homodimer; disulfide-linked, also forms higher order oligomers. Interacts with GNAS. Interacts with ATRNL1. Interacts with MGRN1; this interaction competes with GNAS-binding and thus inhibits agonist-induced cAMP production. Interacts with MRAP and MRAP2; these associated factors increase ligand-sensitivity and generation of cAMP.

The protein resides in the cell membrane. Hormone receptor that acts as a key component of the leptin-melanocortin pathway at the intersection of homeostatic maintenance of energetic state. Plays a role in regulating food intake: activation by a stimulating hormone such as anorexigenic alpha-melanocyte stimulating hormone (alpha-MSH) inhibits appetite, whereas binding to a natural antagonist like Agouti-related protein/AGRP promotes appetite. G-protein-coupled receptor that activates conventional Galphas signaling leading to induction of anorexogenic signaling in the hypothalamus to result in negative energy balance. Regulates the firing activity of neurons from the hypothalamus by alpha-MSH and AGRP independently of Galphas signaling by ligand-induced coupling of closure of inwardly rectifying potassium channel KCNJ13. In intestinal epithelial cells, plays a role in the inhibition of hepatic glucose production via nesfatin-1/NUCB2 leading to increased cyclic adenosine monophosphate (cAMP) levels and glucagon-like peptide 1 (GLP-1) secretion in the intestinal epithelium. This chain is Melanocortin receptor 4 (Mc4r), found in Mus musculus (Mouse).